The chain runs to 101 residues: Small ribosomal subunit protein uS14 (101 aa).

Belongs to the universal ribosomal protein uS14 family. Part of the 30S ribosomal subunit. Contacts proteins S3 and S10.

In terms of biological role, binds 16S rRNA, required for the assembly of 30S particles and may also be responsible for determining the conformation of the 16S rRNA at the A site. The polypeptide is Small ribosomal subunit protein uS14 (Hahella chejuensis (strain KCTC 2396)).